A 502-amino-acid polypeptide reads, in one-letter code: Mannitol 2-dehydrogenase (502 aa).

37–48 lines the NAD(+) pocket; that stretch reads IVHIGVGGFHRA.

The protein belongs to the mannitol dehydrogenase family. In terms of assembly, monomer.

The enzyme catalyses D-mannitol + NAD(+) = D-fructose + NADH + H(+). Its function is as follows. Catalyzes the NAD(H)-dependent interconversion of D-fructose and D-mannitol in the mannitol metabolic pathway. The sequence is that of Mannitol 2-dehydrogenase from Neosartorya fischeri (strain ATCC 1020 / DSM 3700 / CBS 544.65 / FGSC A1164 / JCM 1740 / NRRL 181 / WB 181) (Aspergillus fischerianus).